We begin with the raw amino-acid sequence, 163 residues long: Sorting nexin-3 (163 aa).

Residues 39–162 (VEVRDPRTHF…VRFLQDEVFN (124 aa)) form the PX domain. A 1,2-diacyl-sn-glycero-3-phospho-(1D-myo-inositol-3-phosphate) contacts are provided by Arg82, Ser84, Lys113, Arg119, and Arg128.

Belongs to the sorting nexin family.

It is found in the cytoplasm. Its subcellular location is the golgi apparatus membrane. The protein resides in the prevacuolar compartment membrane. Functionally, required for retention of late Golgi membrane proteins. Component of the retrieval machinery that functions by direct interaction with the cytosolic tails of certain TGN membrane proteins during the sorting/budding process at the prevacuolar compartment. Binds phosphatidylinositol 3-phosphate (PtdIns(P3)). The chain is Sorting nexin-3 (SNX3) from Eremothecium gossypii (strain ATCC 10895 / CBS 109.51 / FGSC 9923 / NRRL Y-1056) (Yeast).